A 411-amino-acid polypeptide reads, in one-letter code: Serine/threonine-protein kinase 54 (411 aa).

Ser43 and Ser45 each carry phosphoserine; by PHOT1. One can recognise a Protein kinase domain in the interval 108 to 385 (LIIKSVIARG…EEVVAMLEAI (278 aa)). Residues 114–122 (IARGTFGTV) and Lys135 contribute to the ATP site. The active-site Proton acceptor is the Asp253. Thr286 carries the phosphothreonine modification.

Belongs to the protein kinase superfamily. Ser/Thr protein kinase family. Binds to CBC2. Associates with PHOT2, BLUS1 and PM H(+)-ATPase (e.g. AHA1). Autophosphorylated. Phosphorylated in guard cells by HT1 in response to low CO(2) concentrations and by PHOT1 after blue light (BL) exposure. Expressed in guard cells.

It localises to the cytoplasm. The protein localises to the cytosol. It catalyses the reaction L-seryl-[protein] + ATP = O-phospho-L-seryl-[protein] + ADP + H(+). It carries out the reaction L-threonyl-[protein] + ATP = O-phospho-L-threonyl-[protein] + ADP + H(+). Serine/threonine protein kinase that phosphorylates proteins on serine and threonine residues. Collectively with CBC2, acts as a negative regulator of stomatal opening, probably via the inhibition of plasma membrane-type ATPases (AHA1 and AHA2) activity in guard cells, but in an abscisic acid (ABA)-independent manner. However, at low concentrations of CO(2), together with CBC2, stimulates stomatal opening via the inhibition of S-type anion channels in response to blue light (BL) and red light (RL), thus being a key component to maximize photosynthesis in the light under low CO(2) conditions. Required for temperature decrease in leaves. Downstream target of HIGH LEAF TEMPERATURE1 (HT1) during low CO(2)-induced stomatal opening. Also functions in the signaling pathways of phototropins. This chain is Serine/threonine-protein kinase 54, found in Arabidopsis thaliana (Mouse-ear cress).